The chain runs to 406 residues: Ubiquitin-like modifier-activating enzyme 5 (406 aa).

ATP-binding residues include G82, D103, K126, N149, and N183. 2 residues coordinate Zn(2+): C225 and C228. Residue C249 is the Glycyl thioester intermediate of the active site. Zn(2+)-binding residues include C302 and C307. The interval 373 to 397 is disordered; sequence EAPSKSTETTSEATTTTTGDETSLD. Residues 378-393 are compositionally biased toward low complexity; sequence STETTSEATTTTTGDE.

The protein belongs to the ubiquitin-activating E1 family. UBA5 subfamily.

In terms of biological role, E1-like enzyme which activates UFM1. This chain is Ubiquitin-like modifier-activating enzyme 5, found in Drosophila willistoni (Fruit fly).